The primary structure comprises 59 residues: UPF0434 protein Shewmr7_2490 (59 aa).

This sequence belongs to the UPF0434 family.

This chain is UPF0434 protein Shewmr7_2490, found in Shewanella sp. (strain MR-7).